Here is a 219-residue protein sequence, read N- to C-terminus: 2-C-methyl-D-erythritol 4-phosphate cytidylyltransferase (219 aa).

The protein belongs to the IspD/TarI cytidylyltransferase family. IspD subfamily.

It carries out the reaction 2-C-methyl-D-erythritol 4-phosphate + CTP + H(+) = 4-CDP-2-C-methyl-D-erythritol + diphosphate. It functions in the pathway isoprenoid biosynthesis; isopentenyl diphosphate biosynthesis via DXP pathway; isopentenyl diphosphate from 1-deoxy-D-xylulose 5-phosphate: step 2/6. In terms of biological role, catalyzes the formation of 4-diphosphocytidyl-2-C-methyl-D-erythritol from CTP and 2-C-methyl-D-erythritol 4-phosphate (MEP). The protein is 2-C-methyl-D-erythritol 4-phosphate cytidylyltransferase of Phocaeicola vulgatus (strain ATCC 8482 / DSM 1447 / JCM 5826 / CCUG 4940 / NBRC 14291 / NCTC 11154) (Bacteroides vulgatus).